We begin with the raw amino-acid sequence, 380 residues long: DNA replication and repair protein RecF (380 aa).

Residue 30–37 coordinates ATP; sequence GNNAQGKS.

It belongs to the RecF family.

Its subcellular location is the cytoplasm. The RecF protein is involved in DNA metabolism; it is required for DNA replication and normal SOS inducibility. RecF binds preferentially to single-stranded, linear DNA. It also seems to bind ATP. The sequence is that of DNA replication and repair protein RecF from Rippkaea orientalis (strain PCC 8801 / RF-1) (Cyanothece sp. (strain PCC 8801)).